Here is a 41-residue protein sequence, read N- to C-terminus: Large ribosomal subunit protein bL36B (41 aa).

Belongs to the bacterial ribosomal protein bL36 family.

This chain is Large ribosomal subunit protein bL36B, found in Vibrio campbellii (strain ATCC BAA-1116).